The sequence spans 674 residues: MKLNKSYILIVVLLLSLFYSSVSSTKTTLIKSNNHYNSDNSNNDNKNININNNNDGDGDDDDDNNKILITPENQNHLIHDIGIDSSSTEILFGSSSNSGSCGEKNNTKQNALANQREANTIIFIIMLILTGSVLIVYFIISLDIPFVPESVAVVTYGIILGIVFRFFYSDIVNHVVSFEPENFFLFILPTIIFETGYSLHKTDFFNNIGPILMFAVFGTIITFLVVGFGIYIVGYFGVSIALSLKDSFAFGSIISSTDPVCTLAIFQALNVDPMLYILVLGESILNDATSMMLYSVVEDTSTRDIIISCAMFTVVAIGSVILGVVMALLLSLILKWINIGKFPALETIFMVMFSYMSYVLAGALDISGVLAVFFFGITLNQYGAYSLSPYTKLTSGQLFRTAAFISETFLFLYFGLSLTAHEFKFDLGLFSWSILFTCLARAISVFPMCFLLNKFLKTKIPWVIQVAIWFAGLRGAFAFSLSLDYISEDEHMNAYIRTNTLLVVVFTIFVFGMGTYPLLRVLGIKTSQTDQSLDNISKPMSKQTKQKDRTKLYESFDDKYFKPWFRKRVPPLANEAIEIFEKMVIQSSHDHELDSNPLRFDDDEEDDDDEDLDFDSDLDLNININTDSIHQSDNNNNDNGNNNNNNNNIIINNNSQHHSNDGSNNKNNDTLPLI.

Residues 1-24 (MKLNKSYILIVVLLLSLFYSSVSS) form the signal peptide. Residues 31 to 65 (KSNNHYNSDNSNNDNKNININNNNDGDGDDDDDNN) are disordered. Positions 37–55 (NSDNSNNDNKNININNNND) are enriched in low complexity. 12 helical membrane-spanning segments follow: residues 120–140 (TIIFIIMLILTGSVLIVYFII), 144–164 (IPFVPESVAVVTYGIILGIVF), 175–195 (VVSFEPENFFLFILPTIIFET), 213–233 (MFAVFGTIITFLVVGFGIYIV), 275–297 (LYILVLGESILNDATSMMLYSVV), 314–334 (VVAIGSVILGVVMALLLSLIL), 336–356 (WINIGKFPALETIFMVMFSYM), 359–379 (VLAGALDISGVLAVFFFGITL), 401–421 (TAAFISETFLFLYFGLSLTAH), 432–452 (WSILFTCLARAISVFPMCFLL), 460–480 (IPWVIQVAIWFAGLRGAFAFS), and 499–519 (NTLLVVVFTIFVFGMGTYPLL). The tract at residues 591–674 (HELDSNPLRF…NKNNDTLPLI (84 aa)) is disordered. The segment covering 601–618 (DDDEEDDDDEDLDFDSDL) has biased composition (acidic residues). The segment covering 627–657 (DSIHQSDNNNNDNGNNNNNNNNIIINNNSQH) has biased composition (low complexity). The segment covering 662–674 (GSNNKNNDTLPLI) has biased composition (polar residues).

This sequence belongs to the monovalent cation:proton antiporter 1 (CPA1) transporter (TC 2.A.36) family.

It is found in the membrane. LY294002, an inhibitor of the catalytic subunit of PI3-kinase, blocks NHE1-dependent (but not NHE1-independent) increase in intracellular pH in response to cAMP. In terms of biological role, regulation of intracellular pH homeostasis in response to cAMP, which is essential for chemotaxis. Necessary for F-actin localization and the kinetics of actin polymerization during chemotaxis and cell polarity but not for directional sensing. The polypeptide is Sodium/hydrogen exchanger 1 (nhe1) (Dictyostelium discoideum (Social amoeba)).